The chain runs to 155 residues: Transcription antitermination protein NusB (155 aa).

The protein belongs to the NusB family.

Functionally, involved in transcription antitermination. Required for transcription of ribosomal RNA (rRNA) genes. Binds specifically to the boxA antiterminator sequence of the ribosomal RNA (rrn) operons. This chain is Transcription antitermination protein NusB, found in Mesorhizobium japonicum (strain LMG 29417 / CECT 9101 / MAFF 303099) (Mesorhizobium loti (strain MAFF 303099)).